A 182-amino-acid polypeptide reads, in one-letter code: Large ribosomal subunit protein uL6 (182 aa).

Belongs to the universal ribosomal protein uL6 family. Part of the 50S ribosomal subunit.

This protein binds to the 23S rRNA, and is important in its secondary structure. It is located near the subunit interface in the base of the L7/L12 stalk, and near the tRNA binding site of the peptidyltransferase center. In Caldicellulosiruptor bescii (strain ATCC BAA-1888 / DSM 6725 / KCTC 15123 / Z-1320) (Anaerocellum thermophilum), this protein is Large ribosomal subunit protein uL6.